A 422-amino-acid polypeptide reads, in one-letter code: tRNA(Met) cytidine acetate ligase (422 aa).

Residues 7 to 20 (ITEY…HLYH), Gly-102, Asn-172, and Arg-197 each bind ATP.

This sequence belongs to the TmcAL family.

Its subcellular location is the cytoplasm. It carries out the reaction cytidine(34) in elongator tRNA(Met) + acetate + ATP = N(4)-acetylcytidine(34) in elongator tRNA(Met) + AMP + diphosphate. Catalyzes the formation of N(4)-acetylcytidine (ac(4)C) at the wobble position of elongator tRNA(Met), using acetate and ATP as substrates. First activates an acetate ion to form acetyladenylate (Ac-AMP) and then transfers the acetyl group to tRNA to form ac(4)C34. The chain is tRNA(Met) cytidine acetate ligase from Halothermothrix orenii (strain H 168 / OCM 544 / DSM 9562).